Here is a 259-residue protein sequence, read N- to C-terminus: Proteasome subunit alpha (259 aa).

It belongs to the peptidase T1A family. As to quaternary structure, the 20S proteasome core is composed of 14 alpha and 14 beta subunits that assemble into four stacked heptameric rings, resulting in a barrel-shaped structure. The two inner rings, each composed of seven catalytic beta subunits, are sandwiched by two outer rings, each composed of seven alpha subunits. The catalytic chamber with the active sites is on the inside of the barrel. Has a gated structure, the ends of the cylinder being occluded by the N-termini of the alpha-subunits. Is capped at one or both ends by the proteasome regulatory ATPase, PAN.

The protein resides in the cytoplasm. The formation of the proteasomal ATPase PAN-20S proteasome complex, via the docking of the C-termini of PAN into the intersubunit pockets in the alpha-rings, triggers opening of the gate for substrate entry. Interconversion between the open-gate and close-gate conformations leads to a dynamic regulation of the 20S proteasome proteolysis activity. Functionally, component of the proteasome core, a large protease complex with broad specificity involved in protein degradation. This chain is Proteasome subunit alpha, found in Methanococcus maripaludis (strain C7 / ATCC BAA-1331).